The following is a 793-amino-acid chain: Caldesmon (793 aa).

At Arg12 the chain carries Phosphoserine. Position 21 is a phosphotyrosine (Glu21). Disordered stretches follow at residues 26-94 (AYQR…DDEA), 108-407 (QKRL…IKGE), and 434-458 (KKQG…KPTF). Residues 26-207 (AYQRNDDDEE…PKRGSIGENQ (182 aa)) form a myosin and calmodulin-binding region. Residues 47 to 56 (QERLRQKQEE) show a composition bias toward basic and acidic residues. Positions 60–74 (GQVTDQVEVNAQNSV) are enriched in polar residues. Residues 108 to 122 (QKRLQEALERQKEFD) are compositionally biased toward basic and acidic residues. A Phosphoserine modification is found at Ser129. Basic and acidic residues-rich tracts occupy residues 146–162 (TTEK…RYEI) and 173–188 (QKND…KEDK). Glu196 and Ser202 each carry phosphoserine. Residues Ile203 and Glu209 each participate in a glycyl lysine isopeptide (Lys-Gly) (interchain with G-Cter in SUMO2) cross-link. 2 stretches are compositionally biased toward basic and acidic residues: residues 236–407 (EEPK…IKGE) and 435–458 (KQGE…KPTF). Repeat copies occupy residues 319 to 332 (EEEK…QRIK), 333 to 346 (EEEK…QRIK), and 347 to 360 (EEEK…QRIK). The 3 X 14 AA tandem repeats of E-E-E-K-R-A-A-E-E-R-Q-R-I-K stretch occupies residues 319–375 (EEEKRAAEERQRIKEEEKRAAEERQRIKEEEKRAAEERQRIKEEEKRAAEERQRARA). Residue Lys459 forms a Glycyl lysine isopeptide (Lys-Gly) (interchain with G-Cter in SUMO2) linkage. A disordered region spans residues 492 to 640 (KSQNGEFMTH…KKPFKCFTPK (149 aa)). 2 stretches are compositionally biased toward basic and acidic residues: residues 532–558 (AGKR…KQKQ) and 566–633 (EELK…DKKP). Residues 564–621 (ELEELKKKREERRKVLEEEEQRRKQEEADRKLREEEEKRRLKEEIERRRAEAAEKRQK) are tropomyosin-binding. Ser643 is modified (phosphoserine). A Glycyl lysine isopeptide (Lys-Gly) (interchain with G-Cter in SUMO2) cross-link involves residue Lys645. Residues 653-686 (LNKSVQKSSGVKSTHQAAIVSKIDSRLEQYTSAI) form a strong actin-binding region. Position 656 is a phosphoserine (Ser656). The interval 664–674 (KSTHQAAIVSK) is tropomyosin-binding. 3 disordered regions span residues 687–706 (EGTK…PVPA), 721–740 (VFSS…GLKV), and 747–793 (NEWL…PTKV). Residues 716-722 (WEKGNVF) are calmodulin-binding. A compositionally biased stretch (polar residues) spans 721–733 (VFSSPTAAGTPNK). A Phosphoserine modification is found at Ser724. Residues Thr730 and Thr753 each carry the phosphothreonine modification. Ser759 is modified (phosphoserine). A compositionally biased stretch (basic and acidic residues) spans 765-784 (SDLRPGDVSSKRNLWEKQSV). The interval 768–793 (RPGDVSSKRNLWEKQSVDKVTSPTKV) is weak actin-binding. Ser789 carries the post-translational modification Phosphoserine.

It belongs to the caldesmon family. Post-translationally, in non-muscle cells, phosphorylation by CDK1 during mitosis causes caldesmon to dissociate from microfilaments. Phosphorylation reduces caldesmon binding to actin, myosin, and calmodulin as well as its inhibition of actomyosin ATPase activity. Phosphorylation also occurs in both quiescent and dividing smooth muscle cells with similar effects on the interaction with actin and calmodulin and on microfilaments reorganization. CDK1-mediated phosphorylation promotes Schwann cell migration during peripheral nerve regeneration. High-molecular-weight caldesmon (isoform 1) is predominantly expressed in smooth muscles, whereas low-molecular-weight caldesmon (isoforms 2, 3, 4 and 5) are widely distributed in non-muscle tissues and cells. Not expressed in skeletal muscle or heart.

It localises to the cytoplasm. It is found in the cytoskeleton. Its subcellular location is the myofibril. The protein resides in the stress fiber. Its function is as follows. Actin- and myosin-binding protein implicated in the regulation of actomyosin interactions in smooth muscle and nonmuscle cells (could act as a bridge between myosin and actin filaments). Stimulates actin binding of tropomyosin which increases the stabilization of actin filament structure. In muscle tissues, inhibits the actomyosin ATPase by binding to F-actin. This inhibition is attenuated by calcium-calmodulin and is potentiated by tropomyosin. Interacts with actin, myosin, two molecules of tropomyosin and with calmodulin. Also plays an essential role during cellular mitosis and receptor capping. Involved in Schwann cell migration during peripheral nerve regeneration. In Homo sapiens (Human), this protein is Caldesmon (CALD1).